Here is an 860-residue protein sequence, read N- to C-terminus: Translation initiation factor IF-2 (860 aa).

The span at 1 to 11 shows a compositional bias: basic and acidic residues; sequence MSDTKSGDDKT. The segment at 1–265 is disordered; it reads MSDTKSGDDK…MRRRQEKFKR (265 aa). Positions 79-88 are enriched in low complexity; sequence AAPVVQEAPK. The segment covering 110–183 has biased composition (basic and acidic residues); sequence SRSEMEARRR…RRRAEEEARR (74 aa). Residues 358 to 525 form the tr-type G domain; the sequence is PRPPVVTIMG…AILLQAEILD (168 aa). The interval 367-374 is G1; that stretch reads GHVDHGKT. GTP is bound at residue 367–374; sequence GHVDHGKT. The segment at 392-396 is G2; that stretch reads GITQH. A G3 region spans residues 413–416; sequence DTPG. GTP contacts are provided by residues 413-417 and 467-470; these read DTPGH and NKID. A G4 region spans residues 467 to 470; sequence NKID. Residues 503–505 form a G5 region; sequence SAT.

Belongs to the TRAFAC class translation factor GTPase superfamily. Classic translation factor GTPase family. IF-2 subfamily.

The protein resides in the cytoplasm. Its function is as follows. One of the essential components for the initiation of protein synthesis. Protects formylmethionyl-tRNA from spontaneous hydrolysis and promotes its binding to the 30S ribosomal subunits. Also involved in the hydrolysis of GTP during the formation of the 70S ribosomal complex. The polypeptide is Translation initiation factor IF-2 (Mesorhizobium japonicum (strain LMG 29417 / CECT 9101 / MAFF 303099) (Mesorhizobium loti (strain MAFF 303099))).